Reading from the N-terminus, the 921-residue chain is Retinoblastoma-associated protein (921 aa).

Residues 1–36 (MPPKAPRRAAAAEPPPPPPPPPREDDPAQDSGPEEL) form a disordered region. At Pro2 the chain carries N,N-dimethylproline; by NTM1. Ser31 and Ser243 each carry phosphoserine. A phosphothreonine mark is found at Thr246, Thr350, Thr364, and Thr367. Positions 341–360 (PIDSFETERTPRKNNPDEEA) are disordered. Over residues 346 to 356 (ETERTPRKNNP) the composition is skewed to basic and acidic residues. The domain A stretch occupies residues 367–573 (TPVRTVMNTI…FDLIKQSKDG (207 aa)). A pocket; binds T and E1A region spans residues 367 to 764 (TPVRTVMNTI…QRLKTNILQY (398 aa)). A Phosphoserine; by CDK2 modification is found at Ser561. Residues 574 to 632 (EGPDNLEPACPLSLPLQGNHTAADMYLSPLRSPKKRTSTTRVNSAANTETQAASAFHTQ) are spacer. Residues Ser601, Ser605, and Ser617 each carry the phosphoserine modification. The domain B stretch occupies residues 633 to 764 (KPLKSTSLAL…QRLKTNILQY (132 aa)). The tract at residues 756 to 921 (RLKTNILQYA…SKDVSNKEEK (166 aa)) is interaction with LIMD1. Residues 764–921 (YASTRPPTLS…SKDVSNKEEK (158 aa)) form a domain; mediates interaction with E4F1 region. Ser773, Ser781, Ser788, and Ser800 each carry phosphoserine. Residue Lys803 is modified to N6-methyllysine; by SMYD2. Ser804 is modified (phosphoserine). A phosphothreonine mark is found at Thr814, Thr816, Thr819, and Thr834. Ser848 bears the Phosphoserine mark. Lys853 carries the N6-methyllysine; by SMYD2 modification. A Bipartite nuclear localization signal motif is present at residues 853–869 (KRSAEGGNPPKPLKKLR). N6-acetyllysine; by PCAF occurs at positions 866 and 867. Residues 872-921 (IEGADEADGSKHLPAESKFQQKLAEMTSTRTRMQKQRMNESKDVSNKEEK) form a disordered region. Residues 908–921 (RMNESKDVSNKEEK) are compositionally biased toward basic and acidic residues.

Belongs to the retinoblastoma protein (RB) family. In terms of assembly, the hypophosphorylated form interacts with and sequesters the E2F1 transcription factor, thereby inhibiting E2F1 transcription. Interacts with heterodimeric E2F/DP transcription factor complexes containing TFDP1 and either E2F1/E2F, E2F3, E2F4 or E2F5, or TFDP2 and E2F4. Interacts (when hyperphosphorylated and hypophosphorylated) with PKP3; the interaction inhibits RB1 interaction with and repression of the transcription factor E2F1, potentially via sequestering RB1 to the cytoplasm. The unphosphorylated form interacts with EID1, ARID3B, KDM5A, SUV39H1, MJD2A/JHDM3A and THOC1. Interacts with the N-terminal domain of TAF1. Interacts with SNW1, ATAD5, AATF, DNMT1, LIN9, LMNA, KMT5B, KMT5C, PELP1, UHRF2, TMPO-alpha and USP4. Interacts with GRIP1 and UBR4. Interacts with ARID4A and KDM5B. Interacts with E4F1 and LIMD1. Interacts with SMARCA4/BRG1 and HDAC1. Interacts with USP4. Interacts (when methylated at Lys-853) with L3MBTL1. Binds to CDK1 and CDK2. Interacts with CHEK2; phosphorylates RB1. Interacts with PRMT2. Interacts with CEBPA. P-TEFB complex interacts with RB1; promotes phosphorylation of RB1. Interacts with RBBP9; the interaction disrupts RB1 binding to E2F1. Interacts with KAT2B/PCAF and EP300/P300. Interacts with PAX5. Interacts (phosphorylated and unphosphorylated) with BLCAP. May interact with NDC80. (Microbial infection) Interacts with adenovirus E1a protein. As to quaternary structure, (Microbial infection) Interacts with SV40 large T antigen. Post-translationally, phosphorylated. Phosphorylated by CDK6 and CDK4, and subsequently by CDK2 at Ser-561 in G1, thereby releasing E2F1 which is then able to activate cell growth. Dephosphorylated at the late M phase. Phosphorylation of threonine residues in domain C promotes interaction between the C-terminal domain C and the Pocket domain, and thereby inhibits interactions with heterodimeric E2F/DP transcription factor complexes. Dephosphorylated at Ser-788 by calcineruin upon calcium stimulation. CDK3/cyclin-C-mediated phosphorylation at Ser-800 and Ser-804 is required for G0-G1 transition. Phosphorylated by CDK1 and CDK2 upon TGFB1-mediated apoptosis. In terms of processing, monomethylation at Lys-803 by SMYD2 enhances phosphorylation at Ser-800 and Ser-804, and promotes cell cycle progression. Monomethylation at Lys-853 by SMYD2 promotes interaction with L3MBTL1. N-terminus is methylated by METTL11A/NTM1. Acetylated in the skin. Acetylation at Lys-866 and Lys-867 regulates subcellular localization during keratinocytes differentiation. As to expression, expressed in the cell nuclei of renal tubules, hepatocytes and skeletal muscles. Expressed in skin (at protein level).

The protein resides in the nucleus. It localises to the cytoplasm. In terms of biological role, tumor suppressor that is a key regulator of the G1/S transition of the cell cycle. The hypophosphorylated form binds transcription regulators of the E2F family, preventing transcription of E2F-responsive genes. Both physically blocks E2Fs transactivating domain and recruits chromatin-modifying enzymes that actively repress transcription. Cyclin and CDK-dependent phosphorylation of RB1 induces its dissociation from E2Fs, thereby activating transcription of E2F responsive genes and triggering entry into S phase. RB1 also promotes the G0-G1 transition upon phosphorylation and activation by CDK3/cyclin-C. Directly involved in heterochromatin formation by maintaining overall chromatin structure and, in particular, that of constitutive heterochromatin by stabilizing histone methylation. Recruits and targets histone methyltransferases SUV39H1, KMT5B and KMT5C, leading to epigenetic transcriptional repression. Controls histone H4 'Lys-20' trimethylation. Inhibits the intrinsic kinase activity of TAF1. Mediates transcriptional repression by SMARCA4/BRG1 by recruiting a histone deacetylase (HDAC) complex to the c-FOS promoter. In resting neurons, transcription of the c-FOS promoter is inhibited by BRG1-dependent recruitment of a phospho-RB1-HDAC1 repressor complex. Upon calcium influx, RB1 is dephosphorylated by calcineurin, which leads to release of the repressor complex. This chain is Retinoblastoma-associated protein (Rb1), found in Mus musculus (Mouse).